Consider the following 331-residue polypeptide: Type 2 lactosamine alpha-2,3-sialyltransferase (331 aa).

Over 1–4 the chain is Cytoplasmic; it reads MRGY. A helical; Signal-anchor for type II membrane protein membrane pass occupies residues 5–25; it reads LVAIFLSAVFLYYVLHCILWG. At 26 to 331 the chain is on the lumenal side; that stretch reads TNVYWAAPVE…KNLVINLTQD (306 aa). 6 N-linked (GlcNAc...) asparagine glycosylation sites follow: asparagine 129, asparagine 181, asparagine 282, asparagine 295, asparagine 308, and asparagine 327.

It belongs to the glycosyltransferase 29 family.

Its subcellular location is the golgi apparatus membrane. The catalysed reaction is a neolactoside nLc4Cer(d18:1(4E)) + CMP-N-acetyl-beta-neuraminate = a neolactoside IV(3)-alpha-NeuAc-nLc4Cer(d18:1(4E)) + CMP + H(+). It carries out the reaction a beta-D-galactosyl-(1-&gt;4)-N-acetyl-beta-D-glucosaminyl derivative + CMP-N-acetyl-beta-neuraminate = an N-acetyl-alpha-neuraminyl-(2-&gt;3)-beta-D-galactosyl-(1-&gt;4)-N-acetyl-beta-D-glucosaminyl derivative + CMP + H(+). The enzyme catalyses a neolactoside nLc6Cer(d18:1(4E)) + CMP-N-acetyl-beta-neuraminate = a neolactoside VI(3)-alpha-NeuNAc-nLc6Cer(d18:1(4E)) + CMP + H(+). Its function is as follows. Transfers the sialyl residue from CMP-N-acetyl-beta-neuraminate to the terminal galactose residue on sugar chains of glycoproteins and glycolipids. It's alpha-2,3-sialyltransferase activity is specific toward type II glycan chains (Galbeta1-4GlcNAc) on glycoproteins and glycolipids such as neolactosides nLc4Cer and nLc6Cer, whose sialyl-products serve as precursors for the Lewis X antigen. Critically involved in the synthesis of functional selectin ligands needed for neutrophil recruitment during inflammation and lymphocyte homing to the lymph nodes. The polypeptide is Type 2 lactosamine alpha-2,3-sialyltransferase (ST3GAL6) (Pongo abelii (Sumatran orangutan)).